A 361-amino-acid chain; its full sequence is 3-dehydroquinate synthase (361 aa).

NAD(+)-binding positions include 106–110 (GVVGD), 130–131 (TT), Lys143, and Lys152. The Zn(2+) site is built by Glu185, His247, and His264.

The protein belongs to the sugar phosphate cyclases superfamily. Dehydroquinate synthase family. Requires NAD(+) as cofactor. It depends on Co(2+) as a cofactor. Zn(2+) is required as a cofactor.

The protein resides in the cytoplasm. The catalysed reaction is 7-phospho-2-dehydro-3-deoxy-D-arabino-heptonate = 3-dehydroquinate + phosphate. It functions in the pathway metabolic intermediate biosynthesis; chorismate biosynthesis; chorismate from D-erythrose 4-phosphate and phosphoenolpyruvate: step 2/7. Catalyzes the conversion of 3-deoxy-D-arabino-heptulosonate 7-phosphate (DAHP) to dehydroquinate (DHQ). The protein is 3-dehydroquinate synthase of Gloeobacter violaceus (strain ATCC 29082 / PCC 7421).